The sequence spans 141 residues: Hemoglobin subunit alpha (141 aa).

The Globin domain maps to 1–141 (VLSPADKTNI…VSTVLTSKYR (141 aa)). Serine 3 is modified (phosphoserine). N6-succinyllysine is present on lysine 7. A Phosphothreonine modification is found at threonine 8. Position 11 is an N6-succinyllysine (lysine 11). Lysine 16 bears the N6-acetyllysine; alternate mark. Lysine 16 bears the N6-succinyllysine; alternate mark. A Phosphotyrosine modification is found at tyrosine 24. Phosphoserine is present on serine 35. Residue lysine 40 is modified to N6-succinyllysine. Residue serine 49 is modified to Phosphoserine. Histidine 58 contacts O2. Histidine 87 is a heme b binding site. Serine 102 carries the phosphoserine modification. Threonine 108 is subject to Phosphothreonine. Serine 124 carries the post-translational modification Phosphoserine. A phosphothreonine mark is found at threonine 134 and threonine 137. A Phosphoserine modification is found at serine 138.

Belongs to the globin family. Heterotetramer of two alpha chains and two beta chains. In terms of tissue distribution, red blood cells.

In terms of biological role, involved in oxygen transport from the lung to the various peripheral tissues. Functionally, hemopressin acts as an antagonist peptide of the cannabinoid receptor CNR1. Hemopressin-binding efficiently blocks cannabinoid receptor CNR1 and subsequent signaling. In Chrysocyon brachyurus (Maned wolf), this protein is Hemoglobin subunit alpha (HBA).